The sequence spans 242 residues: Coiled-coil domain-containing protein 107 (242 aa).

The signal sequence occupies residues 1 to 24 (MEGAGPVLSILGLLLVSAPFGVLG). The disordered stretch occupies residues 27–62 (PSADLGAHPERGSQVSPGTTEPRRQPPPKDQRERAR). The segment covering 47-62 (EPRRQPPPKDQRERAR) has biased composition (basic and acidic residues). Residues 65–85 (SLSLGALYTAAVVAFVLFKCL) traverse the membrane as a helical segment. Residues 97–132 (EKNKKKSSQSEQQLVQLTQQLAQTEQHLNHLMTQLD) adopt a coiled-coil conformation. The disordered stretch occupies residues 186–210 (KEDQEAGNSQAWEEPITWSPETRNL).

Its subcellular location is the membrane. In Mus musculus (Mouse), this protein is Coiled-coil domain-containing protein 107 (Ccdc107).